The sequence spans 359 residues: 4-hydroxy-3-methylbut-2-en-1-yl diphosphate synthase (flavodoxin) (359 aa).

[4Fe-4S] cluster contacts are provided by Cys-264, Cys-267, Cys-299, and Glu-306.

It belongs to the IspG family. Requires [4Fe-4S] cluster as cofactor.

It catalyses the reaction (2E)-4-hydroxy-3-methylbut-2-enyl diphosphate + oxidized [flavodoxin] + H2O + 2 H(+) = 2-C-methyl-D-erythritol 2,4-cyclic diphosphate + reduced [flavodoxin]. It functions in the pathway isoprenoid biosynthesis; isopentenyl diphosphate biosynthesis via DXP pathway; isopentenyl diphosphate from 1-deoxy-D-xylulose 5-phosphate: step 5/6. Functionally, converts 2C-methyl-D-erythritol 2,4-cyclodiphosphate (ME-2,4cPP) into 1-hydroxy-2-methyl-2-(E)-butenyl 4-diphosphate. In Helicobacter pylori (strain Shi470), this protein is 4-hydroxy-3-methylbut-2-en-1-yl diphosphate synthase (flavodoxin).